Reading from the N-terminus, the 234-residue chain is MSGLHILAFGAHADDVEIGMAGTIAKYTKQGYEVGICDLTEADLSSNGTIELRKEEAKVAARIMGVKTRLNLAMPDRGLYMKEEYIREIVKVIRTYKPKLVFAPYYEDRHPDHANCAKLVEEAIFSAGIRKYMPELSPHRVESFYNYMINGFHKPNFCIDISEYLSIKVEALEAYESQFSTGSDGVKTPLTEGYVETVIAREKMFGKEVGVLYAEGFMSKKPVLLHADLLGGCK.

His12, Asp15, and His113 together coordinate Zn(2+).

This sequence belongs to the PIGL family. As to quaternary structure, homohexamer. Trimer of dimers. Requires Zn(2+) as cofactor.

It carries out the reaction (S)-malyl N-acetyl-alpha-D-glucosaminide + H2O = (S)-malyl alpha-D-glucosaminide + acetate. Involved in bacillithiol (BSH) biosynthesis. Catalyzes the second step of the pathway, the deacetylation of N-acetylglucosaminylmalate (GlcNAc-Mal) to glucosamine malate (GlcN-Mal). This chain is N-acetyl-alpha-D-glucosaminyl L-malate deacetylase 1, found in Bacillus cereus (strain ATCC 14579 / DSM 31 / CCUG 7414 / JCM 2152 / NBRC 15305 / NCIMB 9373 / NCTC 2599 / NRRL B-3711).